The sequence spans 417 residues: Serine hydroxymethyltransferase 1 (417 aa).

(6S)-5,6,7,8-tetrahydrofolate is bound by residues L121 and G125–L127. K230 is modified (N6-(pyridoxal phosphate)lysine). Position 355 to 357 (S355 to F357) interacts with (6S)-5,6,7,8-tetrahydrofolate.

It belongs to the SHMT family. In terms of assembly, homodimer. It depends on pyridoxal 5'-phosphate as a cofactor.

The protein localises to the cytoplasm. It carries out the reaction (6R)-5,10-methylene-5,6,7,8-tetrahydrofolate + glycine + H2O = (6S)-5,6,7,8-tetrahydrofolate + L-serine. Its pathway is one-carbon metabolism; tetrahydrofolate interconversion. The protein operates within amino-acid biosynthesis; glycine biosynthesis; glycine from L-serine: step 1/1. Catalyzes the reversible interconversion of serine and glycine with tetrahydrofolate (THF) serving as the one-carbon carrier. This reaction serves as the major source of one-carbon groups required for the biosynthesis of purines, thymidylate, methionine, and other important biomolecules. Also exhibits THF-independent aldolase activity toward beta-hydroxyamino acids, producing glycine and aldehydes, via a retro-aldol mechanism. The protein is Serine hydroxymethyltransferase 1 of Pseudomonas aeruginosa (strain ATCC 15692 / DSM 22644 / CIP 104116 / JCM 14847 / LMG 12228 / 1C / PRS 101 / PAO1).